A 519-amino-acid polypeptide reads, in one-letter code: Chromobox protein homolog 2 (519 aa).

In terms of domain architecture, Chromo spans Phe-12 to Arg-70. A compositionally biased stretch (basic and acidic residues) spans Lys-60–Asn-69. The tract at residues Lys-60–Pro-180 is disordered. Residues Arg-70 to Thr-84 show a composition bias toward basic residues. A DNA-binding region (a.T hook) is located at residues Arg-75–Ser-87. Over residues Lys-103–Ser-119 the composition is skewed to low complexity. Positions Leu-129 to His-141 are enriched in basic and acidic residues. Residues Lys-147 and Lys-154 each participate in a glycyl lysine isopeptide (Lys-Gly) (interchain with G-Cter in SUMO2) cross-link. The Nuclear localization signal signature appears at Lys-164–Pro-169. Position 248 is an asymmetric dimethylarginine; alternate (Arg-248). Arg-248 is subject to Omega-N-methylarginine; alternate. Disordered stretches follow at residues Gln-295 to Thr-336 and Ala-367 to Pro-464. Phosphoserine is present on Ser-303. 2 stretches are compositionally biased toward polar residues: residues Gln-321 to Thr-336 and Thr-384 to Asn-395. Residues Ser-453–Pro-464 are compositionally biased toward low complexity.

As to quaternary structure, component of a PRC1-like complex. The composition of the PRC1 complex may differ between the PRC1 complex in pluripotent embryonic stem cells containing RNF2, CBX7 and PCGF2, and the PRC1 complex in differentiating cells containing RNF2, CBX2, CBX4 and BMI1. Interacts with RING1/RNF2. Interacts (via chromodomain) with histone H3K9Me3 and H3K27me3. May interact with H3C15 and H3C1. Expressed in embryoid bodies.

It localises to the nucleus speckle. The protein resides in the chromosome. Component of a Polycomb group (PcG) multiprotein PRC1-like complex, a complex class required to maintain the transcriptionally repressive state of many genes, including Hox genes, throughout development. PcG PRC1 complex acts via chromatin remodeling and modification of histones; it mediates monoubiquitination of histone H2A 'Lys-119', rendering chromatin heritably changed in its expressibility. Binds to histone H3 trimethylated at 'Lys-9' (H3K9me3) or at 'Lys-27' (H3K27me3). Plays a role in the lineage differentiation of the germ layers in embryonic development. Involved in sexual development, acting as activator of NR5A1 expression. The chain is Chromobox protein homolog 2 (Cbx2) from Mus musculus (Mouse).